The primary structure comprises 97 residues: MMLEQLIQLKQDLIDGSKVEKPSLDDKQIDEMDILVSEALEFNKELKFKLFNKGFVENVTGRVHYINFEQQKLHVKDQNDNTVYINMNNIIRVIYND.

This is an uncharacterized protein from Bacillus subtilis (strain 168).